A 120-amino-acid chain; its full sequence is Glycine cleavage system H protein (120 aa).

The 83-residue stretch at Asp-20–Asp-102 folds into the Lipoyl-binding domain. Lys-61 is modified (N6-lipoyllysine).

This sequence belongs to the GcvH family. The glycine cleavage system is composed of four proteins: P, T, L and H. The cofactor is (R)-lipoate.

The glycine cleavage system catalyzes the degradation of glycine. The H protein shuttles the methylamine group of glycine from the P protein to the T protein. The chain is Glycine cleavage system H protein from Deinococcus radiodurans (strain ATCC 13939 / DSM 20539 / JCM 16871 / CCUG 27074 / LMG 4051 / NBRC 15346 / NCIMB 9279 / VKM B-1422 / R1).